We begin with the raw amino-acid sequence, 315 residues long: MIKLGIVMDPIAHINIKKDTSFAMLLEAQRRGYELHYMEMADLYLINGEARARTRTLSVEQNYDKWYEFGSEQEIKLADLDVILMRKDPPFDTEFIYATYILERAEEEGTLIVNKPQSLRDCNEKLYTAWFADLTPETLVTRNKAQLKAFWEKHGDIIMKPLDGMGGASIFRVKEGDPNIGVIAETLTELGNRYCMAQNYLPAIKDGDKRVLVVDGEPVPYCLARIPQGGETRGNLAAGGRGEPRPLSESDWEIARRVGPTLKAKGLIFVGLDIIGDRLTEINVTSPTCVREIEAEYPISITGMLMDAIEARLAK.

The ATP-grasp domain maps to 125 to 310; the sequence is KLYTAWFADL…ITGMLMDAIE (186 aa). Residue 151-207 participates in ATP binding; sequence WEKHGDIIMKPLDGMGGASIFRVKEGDPNIGVIAETLTELGNRYCMAQNYLPAIKDG. Mg(2+)-binding residues include glutamate 281 and asparagine 283.

This sequence belongs to the prokaryotic GSH synthase family. The cofactor is Mg(2+). It depends on Mn(2+) as a cofactor.

The enzyme catalyses gamma-L-glutamyl-L-cysteine + glycine + ATP = glutathione + ADP + phosphate + H(+). Its pathway is sulfur metabolism; glutathione biosynthesis; glutathione from L-cysteine and L-glutamate: step 2/2. In Salmonella typhimurium (strain LT2 / SGSC1412 / ATCC 700720), this protein is Glutathione synthetase.